The chain runs to 843 residues: Proto-oncogene vav (843 aa).

The 119-residue stretch at 1–119 (MELWRQCTHW…YTLSALSWTP (119 aa)) folds into the Calponin-homology (CH) domain. The region spanning 194-373 (KRCCCLREIQ…RDLAQCVNEV (180 aa)) is the DH domain. A PH domain is found at 402 to 504 (RPKIDGELKI…WMEQFEMAIS (103 aa)). A Phorbol-ester/DAG-type zinc finger spans residues 515 to 564 (GHDFQMFSFEETTSCKACQMLLRGTFYQGYRCYRCRAPAHKECLGRVPPC). One can recognise an SH3 1 domain in the interval 590-658 (LGLPKMEVCQ…PCNRVRPYVH (69 aa)). The SH2 domain maps to 669–763 (WYAGPMERAG…SLDTTLQFPY (95 aa)). Residues 780–840 (KYFGTAKARY…PSNYVEEDYS (61 aa)) form the SH3 2 domain. Residues Y824 and Y842 each carry the phosphotyrosine modification.

As to quaternary structure, interacts with SHB. Interacts with APS, DOCK2, GRB2, GRB3, DOCK2, SLA, TEC and ZNF655/VIK. Interacts with SIAH2; without leading to its degradation. Associates with BLNK, PLCG1, GRB2 and NCK1 in a B-cell antigen receptor-dependent fashion. Interacts with CBLB; which inhibits tyrosine phosphorylation and down-regulates activity. May interact with CCPG1. Interacts with CLNK. Interacts with THEMIS2. Interacts with NEK3 and this interaction is prolactin-dependent. Interacts with ITK. Interacts with PTK2B/PYK2. Interacts with HCK. Interacts with PTK2B/PYK2. Interacts (via SH2 domain) with SYK. Interacts with ANKRD54. Interacts with CD6. Interacts with LCP2; this interaction plays a role in TCR-mediated cytokine production. Post-translationally, phosphorylated by FYN. Phosphorylated on tyrosine residues by HCK in response to IFNG and bacterial lipopolysaccharide (LPS).

In terms of biological role, couples tyrosine kinase signals with the activation of the Rho/Rac GTPases, thus leading to cell differentiation and/or proliferation. This is Proto-oncogene vav (Vav1) from Rattus norvegicus (Rat).